Consider the following 115-residue polypeptide: U3-lycotoxin-Ls1c (115 aa).

The signal sequence occupies residues 1–20 (MKFVLLFGVLLVTLFSYSSA). Residues 21 to 44 (EMLDDFDQADEDELLSLIEKEEAR) constitute a propeptide that is removed on maturation. 4 disulfide bridges follow: Cys-48–Cys-63, Cys-55–Cys-72, Cys-62–Cys-87, and Cys-74–Cys-85.

The protein belongs to the neurotoxin 19 (CSTX) family. 01 subfamily. As to expression, expressed by the venom gland.

The protein localises to the secreted. The polypeptide is U3-lycotoxin-Ls1c (Lycosa singoriensis (Wolf spider)).